Consider the following 501-residue polypeptide: Vitamin D 25-hydroxylase (501 aa).

The first 26 residues, 1-26 (MWKLWRAEEGAAALGGALFLLLFALG), serve as a signal peptide directing secretion. Residue Ala250 coordinates substrate. Residue Cys448 participates in heme binding.

It belongs to the cytochrome P450 family. As to quaternary structure, homodimer. It depends on heme as a cofactor.

It localises to the endoplasmic reticulum membrane. The protein localises to the microsome membrane. It carries out the reaction calciol + reduced [NADPH--hemoprotein reductase] + O2 = calcidiol + oxidized [NADPH--hemoprotein reductase] + H2O + H(+). The enzyme catalyses vitamin D2 + reduced [NADPH--hemoprotein reductase] + O2 = 25-hydroxyvitamin D2 + oxidized [NADPH--hemoprotein reductase] + H2O + H(+). It catalyses the reaction 1alpha-hydroxyvitamin D2 + reduced [NADPH--hemoprotein reductase] + O2 = 1alpha,25-dihydroxyvitamin D2 + oxidized [NADPH--hemoprotein reductase] + H2O + H(+). The catalysed reaction is alfacalcidol + reduced [NADPH--hemoprotein reductase] + O2 = calcitriol + oxidized [NADPH--hemoprotein reductase] + H2O + H(+). Its pathway is hormone biosynthesis; vitamin D biosynthesis. A cytochrome P450 monooxygenase involved in activation of vitamin D precursors. Catalyzes hydroxylation at C-25 of both forms of vitamin D, vitamin D(2) and D(3) (calciol). Can metabolize vitamin D analogs/prodrugs 1alpha-hydroxyvitamin D(2) (doxercalciferol) and 1alpha-hydroxyvitamin D(3) (alfacalcidol) forming 25-hydroxy derivatives. Mechanistically, uses molecular oxygen inserting one oxygen atom into a substrate, and reducing the second into a water molecule, with two electrons provided by NADPH via cytochrome P450 reductase (CPR; NADPH-ferrihemoprotein reductase). The protein is Vitamin D 25-hydroxylase (CYP2R1) of Homo sapiens (Human).